Here is a 98-residue protein sequence, read N- to C-terminus: NADH-ubiquinone oxidoreductase chain 4L (98 aa).

The next 3 helical transmembrane spans lie at 1–21 (MMSI…GVLI), 28–48 (STLL…ALII), and 59–79 (APLI…ALLV).

The protein belongs to the complex I subunit 4L family. In terms of assembly, core subunit of respiratory chain NADH dehydrogenase (Complex I) which is composed of 45 different subunits.

It is found in the mitochondrion inner membrane. It carries out the reaction a ubiquinone + NADH + 5 H(+)(in) = a ubiquinol + NAD(+) + 4 H(+)(out). Functionally, core subunit of the mitochondrial membrane respiratory chain NADH dehydrogenase (Complex I) which catalyzes electron transfer from NADH through the respiratory chain, using ubiquinone as an electron acceptor. Part of the enzyme membrane arm which is embedded in the lipid bilayer and involved in proton translocation. In Lagostrophus fasciatus (Banded hare-wallaby), this protein is NADH-ubiquinone oxidoreductase chain 4L (MT-ND4L).